We begin with the raw amino-acid sequence, 333 residues long: Biotin synthase (333 aa).

The Radical SAM core domain occupies 51-278 (RAIQLSTLMS…KSYVRLSAGR (228 aa)). The [4Fe-4S] cluster site is built by C66, C70, and C73. C110, C141, C201, and R273 together coordinate [2Fe-2S] cluster.

This sequence belongs to the radical SAM superfamily. Biotin synthase family. As to quaternary structure, homodimer. It depends on [4Fe-4S] cluster as a cofactor. [2Fe-2S] cluster is required as a cofactor.

The catalysed reaction is (4R,5S)-dethiobiotin + (sulfur carrier)-SH + 2 reduced [2Fe-2S]-[ferredoxin] + 2 S-adenosyl-L-methionine = (sulfur carrier)-H + biotin + 2 5'-deoxyadenosine + 2 L-methionine + 2 oxidized [2Fe-2S]-[ferredoxin]. It functions in the pathway cofactor biosynthesis; biotin biosynthesis; biotin from 7,8-diaminononanoate: step 2/2. Catalyzes the conversion of dethiobiotin (DTB) to biotin by the insertion of a sulfur atom into dethiobiotin via a radical-based mechanism. This Haemophilus influenzae (strain 86-028NP) protein is Biotin synthase.